The sequence spans 184 residues: MLFDKYDVNSVEVHDPGMVKYINVKSALNLHTGGRFSSYYAGKINMNVVERLINKLMRTEKWTGKKYSAYKITKDAFDIIADKTKQNPLQILINAIENAGPREEVTRLKYGGIAVPKSVDVSPSRRVDEALRNIATGATNASFKSKKSIVNCLADEIMLAAKNDASSFAISKKEEIERVAQSAR.

The protein belongs to the universal ribosomal protein uS7 family. As to quaternary structure, part of the 30S ribosomal subunit.

One of the primary rRNA binding proteins, it binds directly to 16S rRNA where it nucleates assembly of the head domain of the 30S subunit. Is located at the subunit interface close to the decoding center. The polypeptide is Small ribosomal subunit protein uS7 (Thermoplasma volcanium (strain ATCC 51530 / DSM 4299 / JCM 9571 / NBRC 15438 / GSS1)).